Here is a 296-residue protein sequence, read N- to C-terminus: tRNA dimethylallyltransferase (296 aa).

2 to 9 (GPTASGKT) is a binding site for ATP. 4–9 (TASGKT) contacts substrate. Interaction with substrate tRNA regions lie at residues 27 to 30 (DSAL), 151 to 155 (QRLAR), and 232 to 237 (RCVGYR).

This sequence belongs to the IPP transferase family. In terms of assembly, monomer. The cofactor is Mg(2+).

It carries out the reaction adenosine(37) in tRNA + dimethylallyl diphosphate = N(6)-dimethylallyladenosine(37) in tRNA + diphosphate. Functionally, catalyzes the transfer of a dimethylallyl group onto the adenine at position 37 in tRNAs that read codons beginning with uridine, leading to the formation of N6-(dimethylallyl)adenosine (i(6)A). This Shewanella pealeana (strain ATCC 700345 / ANG-SQ1) protein is tRNA dimethylallyltransferase.